The following is a 196-amino-acid chain: Dephospho-CoA kinase (196 aa).

The 192-residue stretch at 5–196 (IIGLTGGIAT…QVDIALNFEL (192 aa)) folds into the DPCK domain. 13-18 (ATGKTT) provides a ligand contact to ATP.

This sequence belongs to the CoaE family.

It is found in the cytoplasm. It carries out the reaction 3'-dephospho-CoA + ATP = ADP + CoA + H(+). The protein operates within cofactor biosynthesis; coenzyme A biosynthesis; CoA from (R)-pantothenate: step 5/5. Its function is as follows. Catalyzes the phosphorylation of the 3'-hydroxyl group of dephosphocoenzyme A to form coenzyme A. This is Dephospho-CoA kinase from Trichormus variabilis (strain ATCC 29413 / PCC 7937) (Anabaena variabilis).